The following is a 445-amino-acid chain: 26S proteasome regulatory subunit RPN5 (445 aa).

Serine 2 carries the N-acetylserine modification. The PCI domain occupies 233-407 (EYLEVAQYLQ…KIVNFEKPKN (175 aa)).

This sequence belongs to the proteasome subunit p55 family. Post-translationally, N-acetylated by NAT1.

Functionally, acts as a regulatory subunit of the 26S proteasome which is involved in the ATP-dependent degradation of ubiquitinated proteins. The protein is 26S proteasome regulatory subunit RPN5 (RPN5) of Saccharomyces cerevisiae (strain ATCC 204508 / S288c) (Baker's yeast).